Here is a 334-residue protein sequence, read N- to C-terminus: Beta-ketoacyl-[acyl-carrier-protein] synthase III (334 aa).

Residues Cys-116 and His-256 contribute to the active site. The tract at residues 257–261 (QANLR) is ACP-binding. Residue Asn-286 is part of the active site.

This sequence belongs to the thiolase-like superfamily. FabH family. In terms of assembly, homodimer.

The protein resides in the cytoplasm. It catalyses the reaction malonyl-[ACP] + acetyl-CoA + H(+) = 3-oxobutanoyl-[ACP] + CO2 + CoA. The protein operates within lipid metabolism; fatty acid biosynthesis. Its function is as follows. Catalyzes the condensation reaction of fatty acid synthesis by the addition to an acyl acceptor of two carbons from malonyl-ACP. Catalyzes the first condensation reaction which initiates fatty acid synthesis and may therefore play a role in governing the total rate of fatty acid production. Possesses both acetoacetyl-ACP synthase and acetyl transacylase activities. Its substrate specificity determines the biosynthesis of branched-chain and/or straight-chain of fatty acids. The polypeptide is Beta-ketoacyl-[acyl-carrier-protein] synthase III (Phocaeicola vulgatus (strain ATCC 8482 / DSM 1447 / JCM 5826 / CCUG 4940 / NBRC 14291 / NCTC 11154) (Bacteroides vulgatus)).